Here is a 458-residue protein sequence, read N- to C-terminus: Sulfite exporter TauE/SafE family protein 2 (458 aa).

12 helical membrane-spanning segments follow: residues 5–25 (FVPI…EQEP), 53–73 (IELT…SSIS), 74–94 (SAGG…VAGL), 101–121 (SFSA…NLFV), 128–148 (GKTL…LLGV), 150–170 (IGVI…FAVF), 227–247 (FPWI…AVYL), 267–287 (YWLI…WICF), 324–344 (VMAL…GMLI), 348–368 (LLQV…MVLF), 386–406 (GTAS…LKVV), and 418–438 (IIVF…TSYG).

It belongs to the 4-toluene sulfonate uptake permease (TSUP) (TC 2.A.102) family.

The protein resides in the membrane. This Arabidopsis thaliana (Mouse-ear cress) protein is Sulfite exporter TauE/SafE family protein 2.